Consider the following 450-residue polypeptide: UDP-N-acetylmuramoylalanine--D-glutamate ligase (450 aa).

119 to 125 contributes to the ATP binding site; sequence GSNGKTT.

It belongs to the MurCDEF family.

It is found in the cytoplasm. The enzyme catalyses UDP-N-acetyl-alpha-D-muramoyl-L-alanine + D-glutamate + ATP = UDP-N-acetyl-alpha-D-muramoyl-L-alanyl-D-glutamate + ADP + phosphate + H(+). It participates in cell wall biogenesis; peptidoglycan biosynthesis. Cell wall formation. Catalyzes the addition of glutamate to the nucleotide precursor UDP-N-acetylmuramoyl-L-alanine (UMA). This chain is UDP-N-acetylmuramoylalanine--D-glutamate ligase, found in Streptococcus pneumoniae (strain JJA).